The following is a 115-amino-acid chain: Large ribosomal subunit protein bL20 (115 aa).

This sequence belongs to the bacterial ribosomal protein bL20 family.

Binds directly to 23S ribosomal RNA and is necessary for the in vitro assembly process of the 50S ribosomal subunit. It is not involved in the protein synthesizing functions of that subunit. The protein is Large ribosomal subunit protein bL20 of Cytophaga hutchinsonii (strain ATCC 33406 / DSM 1761 / CIP 103989 / NBRC 15051 / NCIMB 9469 / D465).